Consider the following 1142-residue polypeptide: Zinc finger MYM-type protein 1 (1142 aa).

Lysine 25 participates in a covalent cross-link: Glycyl lysine isopeptide (Lys-Gly) (interchain with G-Cter in SUMO2). 3 MYM-type zinc fingers span residues 110 to 148 (QLFC…PKDV), 160 to 203 (KTFC…QYEV), and 210 to 245 (HNLC…SSSL). A Glycyl lysine isopeptide (Lys-Gly) (interchain with G-Cter in SUMO2) cross-link involves residue lysine 284. An MYM-type 4 zinc finger spans residues 300–331 (ELFCSINCFSAYSKAKMESSSVSVVSVVHDTS). Polar residues predominate over residues 385 to 396 (KSSPSEPSNAVA). The interval 385-413 (KSSPSEPSNAVASSSTEQPSVSPSSSVFS) is disordered. Over residues 397 to 413 (SSSTEQPSVSPSSSVFS) the composition is skewed to low complexity. Residues 452–538 (KSRSIKKSCC…YQFCDGAVSD (87 aa)) form a TTF-type zinc finger.

The protein localises to the nucleus. The polypeptide is Zinc finger MYM-type protein 1 (ZMYM1) (Homo sapiens (Human)).